Here is a 135-residue protein sequence, read N- to C-terminus: Adult cuticle protein 1 (135 aa).

The signal sequence occupies residues methionine 1–serine 19. Repeat copies occupy residues alanine 72–alanine 75, alanine 78–alanine 81, and alanine 128–alanine 131.

As to expression, detected in the epidermis underlying the head and thorax (including legs and wings), but not in the abdominal epidermis of newly eclosed flies.

Functionally, component of the cuticle of the adult fruit fly. Could be involved in thickening of the hard adult cuticle. In Drosophila melanogaster (Fruit fly), this protein is Adult cuticle protein 1 (Acp1).